Reading from the N-terminus, the 1040-residue chain is Protocadherin-10 (1040 aa).

The first 18 residues, 1 to 18 (MIVLLLFALLWMVEGVFS), serve as a signal peptide directing secretion. 6 consecutive Cadherin domains span residues 19–122 (QLHY…PPSF), 123–250 (PEPD…VPAF), 251–358 (DQPV…APEI), 359–463 (SFST…APRF), 464–574 (SQPV…APAI), and 582–690 (NGTP…GGGG). At 19 to 715 (QLHYTVQEEQ…GGGETSLDLT (697 aa)) the chain is on the extracellular side. A compositionally biased stretch (gly residues) spans 207–223 (GGGGGVGEGGGGGGGAG). Residues 207 to 228 (GGGGGVGEGGGGGGGAGLPPQQ) are disordered. Residue Asn-273 is glycosylated (N-linked (GlcNAc...) asparagine). Asn-557 is a glycosylation site (N-linked (GlcNAc...) asparagine). The segment covering 686 to 697 (QGGGGSGGGGSG) has biased composition (gly residues). The segment at 686–708 (QGGGGSGGGGSGEHQRPSRSGGG) is disordered. A helical membrane pass occupies residues 716–736 (LILIIALGSVSFIFLLAMIVL). Over 737 to 1040 (AVRCQKEKKL…PPYLTRKRIC (304 aa)) the chain is Cytoplasmic. The tract at residues 899-927 (AFQEADIVSSKDSGHGDSEQGDSDHDATN) is disordered. Basic and acidic residues predominate over residues 910-926 (DSGHGDSEQGDSDHDAT).

In terms of tissue distribution, moderately expressed in all regions of the brain examined, as well as in testis and ovary, and low expression in all other tissues tested.

The protein localises to the cell membrane. Functionally, potential calcium-dependent cell-adhesion protein. In terms of biological role, (Microbial infection) Acts as a receptor for Western equine encephalitis virus. This Homo sapiens (Human) protein is Protocadherin-10 (PCDH10).